The following is a 323-amino-acid chain: Sphingolipid delta(4)-desaturase DES1 (323 aa).

Gly2 is lipidated: N-myristoyl glycine. The next 2 helical transmembrane spans lie at 41–61 and 68–88; these read HNLI…FYLV and WVIF…TLAI. Positions 89 to 93 match the Histidine box-1 motif; it reads HEISH. Residues 104–124 form a helical membrane-spanning segment; sequence WNRWFGMFANLSLGVPYSISF. Residues 128–132 carry the Histidine box-2 motif; sequence HMDHH. 3 consecutive transmembrane segments (helical) span residues 152–172, 184–204, and 209–229; these read FFCT…FYAF, YLEI…YYVF, and LVYM…SGHF. The Histidine box-3 signature appears at 259–263; sequence HNEHH. Phosphoserine is present on Ser307.

Belongs to the fatty acid desaturase type 1 family. DEGS subfamily. In terms of assembly, interacts with RLBP1; the interaction increases synthesis of chromophore-precursors by DEGS1. In terms of processing, myristoylation can target the enzyme to the mitochondria leading to an increase in ceramide levels. In terms of tissue distribution, detected in testis. Detected in pachytene spermatocytes and round spermatids. Expressed in retina and retinal pigment epithelium by Mueller cells (at protein level).

Its subcellular location is the mitochondrion membrane. It localises to the endoplasmic reticulum membrane. The enzyme catalyses an N-acylsphinganine + 2 Fe(II)-[cytochrome b5] + O2 + 2 H(+) = an N-acylsphing-4-enine + 2 Fe(III)-[cytochrome b5] + 2 H2O. It catalyses the reaction all-trans-retinol = 11-cis-retinol. The catalysed reaction is all-trans-retinol = 9-cis-retinol. It carries out the reaction all-trans-retinol = 13-cis-retinol. The enzyme catalyses 11-cis-retinol = 13-cis-retinol. It catalyses the reaction 11-cis-retinol = 9-cis-retinol. Functionally, has sphingolipid-delta-4-desaturase activity. Converts D-erythro-sphinganine to D-erythro-sphingosine (E-sphing-4-enine). Catalyzes the equilibrium isomerization of retinols. The chain is Sphingolipid delta(4)-desaturase DES1 from Mus musculus (Mouse).